The chain runs to 440 residues: Kinetochore protein NUF2 homolog (440 aa).

Coiled-coil stretches lie at residues 142–239 (LGLL…LRSQ) and 299–386 (INEQ…RQTN).

Belongs to the NUF2 family. As to quaternary structure, component of the NDC80 complex, which consists of NDC80, NUF2, SPC24 and SPC25.

It localises to the chromosome. The protein resides in the centromere. Its function is as follows. Acts as a component of the essential kinetochore-associated NDC80 complex, which is required for chromosome segregation and spindle checkpoint activity to ensure proper cell division. This is Kinetochore protein NUF2 homolog from Arabidopsis thaliana (Mouse-ear cress).